A 430-amino-acid polypeptide reads, in one-letter code: Adenylosuccinate synthetase (430 aa).

Residues 12 to 18 and 40 to 42 each bind GTP; these read GDEGKGK and GHT. The Proton acceptor role is filled by Asp-13. Positions 13 and 40 each coordinate Mg(2+). Residues 13-16, 38-41, Thr-128, Arg-142, Gln-223, Thr-238, and Arg-302 contribute to the IMP site; these read DEGK and NAGH. The active-site Proton donor is His-41. A substrate-binding site is contributed by 298–304; sequence TTTGRPR. Residues Arg-304, 330 to 332, and 412 to 414 each bind GTP; these read SID and SVG.

The protein belongs to the adenylosuccinate synthetase family. In terms of assembly, homodimer. It depends on Mg(2+) as a cofactor.

It is found in the cytoplasm. The catalysed reaction is IMP + L-aspartate + GTP = N(6)-(1,2-dicarboxyethyl)-AMP + GDP + phosphate + 2 H(+). Its pathway is purine metabolism; AMP biosynthesis via de novo pathway; AMP from IMP: step 1/2. In terms of biological role, plays an important role in the de novo pathway of purine nucleotide biosynthesis. Catalyzes the first committed step in the biosynthesis of AMP from IMP. The chain is Adenylosuccinate synthetase from Streptococcus pyogenes serotype M2 (strain MGAS10270).